A 392-amino-acid polypeptide reads, in one-letter code: Succinate--CoA ligase [ADP-forming] subunit beta (392 aa).

Positions 9–236 (RDLFERHGLP…QAAVDPLEQA (228 aa)) constitute an ATP-grasp domain. ATP-binding positions include Lys45, 52–54 (GRG), Ala94, and Glu99. Mg(2+) contacts are provided by Asn191 and Asp205. Substrate contacts are provided by residues Asn256 and 318–320 (GIT).

Belongs to the succinate/malate CoA ligase beta subunit family. Heterotetramer of two alpha and two beta subunits. Mg(2+) serves as cofactor.

It carries out the reaction succinate + ATP + CoA = succinyl-CoA + ADP + phosphate. It catalyses the reaction GTP + succinate + CoA = succinyl-CoA + GDP + phosphate. It functions in the pathway carbohydrate metabolism; tricarboxylic acid cycle; succinate from succinyl-CoA (ligase route): step 1/1. Its function is as follows. Succinyl-CoA synthetase functions in the citric acid cycle (TCA), coupling the hydrolysis of succinyl-CoA to the synthesis of either ATP or GTP and thus represents the only step of substrate-level phosphorylation in the TCA. The beta subunit provides nucleotide specificity of the enzyme and binds the substrate succinate, while the binding sites for coenzyme A and phosphate are found in the alpha subunit. This Salinispora arenicola (strain CNS-205) protein is Succinate--CoA ligase [ADP-forming] subunit beta.